Here is a 368-residue protein sequence, read N- to C-terminus: RNA polymerase sigma factor SigA (368 aa).

The disordered stretch occupies residues 60-86 (VVDENGDPSEHSLKKDEKEAEKAQAED). Residues 67 to 84 (PSEHSLKKDEKEAEKAQA) are compositionally biased toward basic and acidic residues. Residues 135–205 (LAEANLRLVV…TRAIADQART (71 aa)) are sigma-70 factor domain-2. Residues 159-162 (DLIQ) carry the Interaction with polymerase core subunit RpoC motif. Residues 214-290 (ETINKLIRIQ…DQDATSPAEH (77 aa)) are sigma-70 factor domain-3. A sigma-70 factor domain-4 region spans residues 303–356 (VLDTLTDREENVLRLRFGLDDGRTRTLEEVGKVFGVTRERIRQIEAKALRKLRH). The segment at residues 329-348 (LEEVGKVFGVTRERIRQIEA) is a DNA-binding region (H-T-H motif).

The protein belongs to the sigma-70 factor family. RpoD/SigA subfamily. Interacts transiently with the RNA polymerase catalytic core.

It localises to the cytoplasm. Its function is as follows. Sigma factors are initiation factors that promote the attachment of RNA polymerase to specific initiation sites and are then released. This sigma factor is the primary sigma factor during exponential growth. The sequence is that of RNA polymerase sigma factor SigA from Enterococcus faecalis (strain ATCC 700802 / V583).